We begin with the raw amino-acid sequence, 235 residues long: Large ribosomal subunit protein uL1 (235 aa).

Belongs to the universal ribosomal protein uL1 family. In terms of assembly, part of the 50S ribosomal subunit.

Its function is as follows. Binds directly to 23S rRNA. The L1 stalk is quite mobile in the ribosome, and is involved in E site tRNA release. Protein L1 is also a translational repressor protein, it controls the translation of the L11 operon by binding to its mRNA. The protein is Large ribosomal subunit protein uL1 of Nitratidesulfovibrio vulgaris (strain ATCC 29579 / DSM 644 / CCUG 34227 / NCIMB 8303 / VKM B-1760 / Hildenborough) (Desulfovibrio vulgaris).